Here is a 352-residue protein sequence, read N- to C-terminus: S-adenosylmethionine:tRNA ribosyltransferase-isomerase (352 aa).

The protein belongs to the QueA family. Monomer.

Its subcellular location is the cytoplasm. It carries out the reaction 7-aminomethyl-7-carbaguanosine(34) in tRNA + S-adenosyl-L-methionine = epoxyqueuosine(34) in tRNA + adenine + L-methionine + 2 H(+). It participates in tRNA modification; tRNA-queuosine biosynthesis. Its function is as follows. Transfers and isomerizes the ribose moiety from AdoMet to the 7-aminomethyl group of 7-deazaguanine (preQ1-tRNA) to give epoxyqueuosine (oQ-tRNA). In Paraburkholderia phytofirmans (strain DSM 17436 / LMG 22146 / PsJN) (Burkholderia phytofirmans), this protein is S-adenosylmethionine:tRNA ribosyltransferase-isomerase.